A 426-amino-acid polypeptide reads, in one-letter code: Probable indole-3-pyruvate monooxygenase YUCCA8 (426 aa).

29-34 is an FAD binding site; it reads GAGPSG. Residue 199-204 coordinates NADP(+); the sequence is GCGNSG.

The protein belongs to the FMO family. FAD serves as cofactor. As to expression, expressed in root tips and in hydathodes. Expressed in root vasculature and quiescent center, but not in the meristematic zone of the root tip.

It catalyses the reaction indole-3-pyruvate + NADPH + O2 + H(+) = (indol-3-yl)acetate + CO2 + NADP(+) + H2O. Its pathway is plant hormone metabolism; auxin biosynthesis. Its function is as follows. Involved in auxin biosynthesis. Belongs to the set of redundant YUCCA genes probably responsible for auxin biosynthesis in roots. The sequence is that of Probable indole-3-pyruvate monooxygenase YUCCA8 (YUC8) from Arabidopsis thaliana (Mouse-ear cress).